We begin with the raw amino-acid sequence, 113 residues long: MPKVIFLPNEDFCPEGMVVDAATGDNLLEVAHNAGVEIHHACDGSCACTTCHVIVREGFDSLNETSDQEEDMLDKAWGLEMDSRLSCQCVVGNEDLVVEIPKYNLNHANEAAH.

Positions Pro-2–Asn-104 constitute a 2Fe-2S ferredoxin-type domain. Positions 42, 48, 51, and 87 each coordinate [2Fe-2S] cluster.

The protein belongs to the adrenodoxin/putidaredoxin family. It depends on [2Fe-2S] cluster as a cofactor.

Its function is as follows. Ferredoxin are iron-sulfur proteins that transfer electrons in a wide variety of metabolic reactions. This is 2Fe-2S ferredoxin (fdx) from Haemophilus influenzae (strain ATCC 51907 / DSM 11121 / KW20 / Rd).